Consider the following 469-residue polypeptide: Argininosuccinate lyase (469 aa).

The protein belongs to the lyase 1 family. Argininosuccinate lyase subfamily.

The protein localises to the cytoplasm. It catalyses the reaction 2-(N(omega)-L-arginino)succinate = fumarate + L-arginine. The protein operates within amino-acid biosynthesis; L-arginine biosynthesis; L-arginine from L-ornithine and carbamoyl phosphate: step 3/3. In Polaromonas naphthalenivorans (strain CJ2), this protein is Argininosuccinate lyase.